The sequence spans 188 residues: Gamma-glutamylcyclotransferase (188 aa).

Residue 19–24 (YFAYGS) participates in substrate binding. Residue Glu-98 is the Proton acceptor of the active site. Position 139 (Tyr-139) interacts with substrate. Ser-173 is modified (phosphoserine).

The protein belongs to the gamma-glutamylcyclotransferase family. Homodimer.

The enzyme catalyses an alpha-(gamma-L-glutamyl)-L-amino acid = 5-oxo-L-proline + an L-alpha-amino acid. Catalyzes the formation of 5-oxoproline from gamma-glutamyl dipeptides and may play a significant role in glutathione homeostasis. Induces release of cytochrome c from mitochondria with resultant induction of apoptosis. In Homo sapiens (Human), this protein is Gamma-glutamylcyclotransferase.